A 420-amino-acid polypeptide reads, in one-letter code: Inheritance of peroxisomes protein 1 (420 aa).

Residues methionine 1–lysine 10 are compositionally biased toward basic and acidic residues. Disordered stretches follow at residues methionine 1–arginine 75 and serine 273–aspartate 309. Residues leucine 30 to asparagine 39 are compositionally biased toward low complexity. Over residues aspartate 45 to serine 56 the composition is skewed to polar residues. At serine 273 the chain carries Phosphoserine. Acidic residues predominate over residues asparagine 295 to aspartate 309.

It belongs to the INP1 family. In terms of assembly, interacts with PEX25, PEX30 and VPS1.

It localises to the peroxisome membrane. Its function is as follows. Required for peroxisome inheritance. The polypeptide is Inheritance of peroxisomes protein 1 (INP1) (Saccharomyces cerevisiae (strain ATCC 204508 / S288c) (Baker's yeast)).